The following is a 326-amino-acid chain: Meiotically up-regulated gene 113 protein (326 aa).

The protein localises to the cytoplasm. Its function is as follows. Has a role in meiosis. The chain is Meiotically up-regulated gene 113 protein (mug113) from Schizosaccharomyces pombe (strain 972 / ATCC 24843) (Fission yeast).